A 261-amino-acid polypeptide reads, in one-letter code: Small ribosomal subunit protein eS1z (261 aa).

A compositionally biased stretch (basic residues) spans 1-18 (MAVGKNKRISKGKKGGKK). A disordered region spans residues 1–20 (MAVGKNKRISKGKKGGKKKA).

The protein belongs to the eukaryotic ribosomal protein eS1 family. As to quaternary structure, component of the small ribosomal subunit. Mature ribosomes consist of a small (40S) and a large (60S) subunit. The 40S subunit contains about 33 different proteins and 1 molecule of RNA (18S). The 60S subunit contains about 49 different proteins and 3 molecules of RNA (25S, 5.8S and 5S).

The protein localises to the cytoplasm. In Vitis vinifera (Grape), this protein is Small ribosomal subunit protein eS1z.